A 392-amino-acid chain; its full sequence is SH3 domain-binding protein 5-like (392 aa).

The tract at residues 1–57 (MADLKKAAGGRETPQGELRSEVVEDEGPRSPVAEEPGGSGSNSSETKLSPREEEELD) is disordered. T13 is subject to Phosphothreonine. Over residues 18 to 28 (LRSEVVEDEGP) the composition is skewed to basic and acidic residues. S30 and S49 each carry phosphoserine. 2 coiled-coil regions span residues 59 to 140 (RIQE…YERA) and 169 to 272 (WQEM…EQIH). A disordered region spans residues 275–332 (RRGLPPHPLGPRRSSPVGAEAGPEGIEDGDSGIEGAEGGGLEEGSSLGPGPGPDTDTL). Low complexity predominate over residues 317–332 (EGSSLGPGPGPDTDTL). Phosphoserine is present on residues S342, S349, S357, S361, and S377. Residues 364 to 392 (GQELGAQSRGRRGSDIGVRGGRHQRSVSL) are disordered. The span at 383–392 (GGRHQRSVSL) shows a compositional bias: basic residues.

This sequence belongs to the SH3BP5 family.

In terms of biological role, functions as a guanine nucleotide exchange factor (GEF) for RAB11A. This is SH3 domain-binding protein 5-like (Sh3bp5l) from Mus musculus (Mouse).